Here is a 402-residue protein sequence, read N- to C-terminus: Subtilisin-like protease 9 (402 aa).

Positions 1–20 (MGFFRQLFSLSLCALSLAIP) are cleaved as a signal peptide. Positions 21 to 120 (SKLIGLENTQ…VEVDRVVKLD (100 aa)) are excised as a propeptide. The 84-residue stretch at 36 to 119 (SYIVVMKSTI…YVEVDRVVKL (84 aa)) folds into the Inhibitor I9 domain. Positions 130–402 (SWGLGRISHK…RKLLYNGSGA (273 aa)) constitute a Peptidase S8 domain. Active-site charge relay system residues include Asp162 and His193. Asn254 is a glycosylation site (N-linked (GlcNAc...) asparagine). Residue Ser348 is the Charge relay system of the active site. N-linked (GlcNAc...) asparagine glycans are attached at residues Asn390 and Asn398.

This sequence belongs to the peptidase S8 family.

The protein localises to the secreted. In terms of biological role, secreted subtilisin-like serine protease with keratinolytic activity that contributes to pathogenicity. The polypeptide is Subtilisin-like protease 9 (SUB9) (Arthroderma benhamiae (strain ATCC MYA-4681 / CBS 112371) (Trichophyton mentagrophytes)).